A 201-amino-acid polypeptide reads, in one-letter code: Single-stranded DNA-binding protein, mitochondrial (201 aa).

Residues 71 to 184 (VHRAIICGKV…RDGKIRMIKY (114 aa)) form the SSB domain.

It is found in the mitochondrion. Its function is as follows. Binds to ss-DNA. In Arabidopsis thaliana (Mouse-ear cress), this protein is Single-stranded DNA-binding protein, mitochondrial.